Consider the following 245-residue polypeptide: Cell division protein ZapD (245 aa).

The protein belongs to the ZapD family. Interacts with FtsZ.

The protein localises to the cytoplasm. In terms of biological role, cell division factor that enhances FtsZ-ring assembly. Directly interacts with FtsZ and promotes bundling of FtsZ protofilaments, with a reduction in FtsZ GTPase activity. The chain is Cell division protein ZapD from Photobacterium profundum (strain SS9).